The following is a 273-amino-acid chain: Thiazole synthase (273 aa).

Lys111 (schiff-base intermediate with DXP) is an active-site residue. 1-deoxy-D-xylulose 5-phosphate-binding positions include Gly172, 198–199, and 220–221; these read AG and NS. The segment at 251-273 is disordered; it reads RLPRRGQASASSPTTGLISGKDK. Residues 258-267 show a composition bias toward polar residues; sequence ASASSPTTGL.

The protein belongs to the ThiG family. In terms of assembly, homotetramer. Forms heterodimers with either ThiH or ThiS.

It is found in the cytoplasm. It catalyses the reaction [ThiS sulfur-carrier protein]-C-terminal-Gly-aminoethanethioate + 2-iminoacetate + 1-deoxy-D-xylulose 5-phosphate = [ThiS sulfur-carrier protein]-C-terminal Gly-Gly + 2-[(2R,5Z)-2-carboxy-4-methylthiazol-5(2H)-ylidene]ethyl phosphate + 2 H2O + H(+). The protein operates within cofactor biosynthesis; thiamine diphosphate biosynthesis. Functionally, catalyzes the rearrangement of 1-deoxy-D-xylulose 5-phosphate (DXP) to produce the thiazole phosphate moiety of thiamine. Sulfur is provided by the thiocarboxylate moiety of the carrier protein ThiS. In vitro, sulfur can be provided by H(2)S. This chain is Thiazole synthase, found in Synechococcus sp. (strain CC9902).